A 261-amino-acid polypeptide reads, in one-letter code: Imidazole glycerol phosphate synthase subunit HisF (261 aa).

Active-site residues include Asp-11 and Asp-130.

It belongs to the HisA/HisF family. In terms of assembly, heterodimer of HisH and HisF.

It localises to the cytoplasm. It carries out the reaction 5-[(5-phospho-1-deoxy-D-ribulos-1-ylimino)methylamino]-1-(5-phospho-beta-D-ribosyl)imidazole-4-carboxamide + L-glutamine = D-erythro-1-(imidazol-4-yl)glycerol 3-phosphate + 5-amino-1-(5-phospho-beta-D-ribosyl)imidazole-4-carboxamide + L-glutamate + H(+). The protein operates within amino-acid biosynthesis; L-histidine biosynthesis; L-histidine from 5-phospho-alpha-D-ribose 1-diphosphate: step 5/9. IGPS catalyzes the conversion of PRFAR and glutamine to IGP, AICAR and glutamate. The HisF subunit catalyzes the cyclization activity that produces IGP and AICAR from PRFAR using the ammonia provided by the HisH subunit. The protein is Imidazole glycerol phosphate synthase subunit HisF of Jannaschia sp. (strain CCS1).